The chain runs to 113 residues: Hemerythrin (113 aa).

Fe cation-binding residues include H25, H54, E58, H73, H77, H101, and D106.

This sequence belongs to the hemerythrin family. Homotrimer.

Hemerythrin is a respiratory protein in blood cells of certain marine worms. The oxygen-binding site in each chain contains two iron atoms. The chain is Hemerythrin from Siphonosoma cumanense (Sipunculan worm).